Consider the following 172-residue polypeptide: Pre-intermoult gene 1 protein (172 aa).

A signal peptide spans 1-22; sequence MKLTKLWLLFVCLGLFVTLVVS. Over residues 25 to 45 the composition is skewed to acidic residues; the sequence is TDSDADSDSSADSDSSADSDE. Residues 25–172 are disordered; that stretch reads TDSDADSDSS…RRNNNSRRRG (148 aa). 3 tandem repeats follow at residues 27–32, 33–38, and 39–44. The tract at residues 27-44 is 3 X 6 AA tandem repeats of S-S-A-D-S-D; sequence SDADSDSSADSDSSADSD. The segment covering 55–77 has biased composition (low complexity); the sequence is TSTTESSATNSSGSSDDASGSSS. Positions 78–95 are enriched in acidic residues; that stretch reads DVDDGSDDDTDSGSDTDY. Residues 104–172 are compositionally biased toward basic residues; that stretch reads VKKRANRKKA…RRNNNSRRRG (69 aa).

Low expression in first to third instar larvae salivary glands.

The protein is Pre-intermoult gene 1 protein (Pig1) of Drosophila melanogaster (Fruit fly).